A 231-amino-acid chain; its full sequence is Deoxyribose-phosphate aldolase (231 aa).

The Proton donor/acceptor role is filled by Asp-97. Lys-162 functions as the Schiff-base intermediate with acetaldehyde in the catalytic mechanism. The Proton donor/acceptor role is filled by Lys-191.

This sequence belongs to the DeoC/FbaB aldolase family. DeoC type 1 subfamily.

The protein localises to the cytoplasm. The enzyme catalyses 2-deoxy-D-ribose 5-phosphate = D-glyceraldehyde 3-phosphate + acetaldehyde. It functions in the pathway carbohydrate degradation; 2-deoxy-D-ribose 1-phosphate degradation; D-glyceraldehyde 3-phosphate and acetaldehyde from 2-deoxy-alpha-D-ribose 1-phosphate: step 2/2. Functionally, catalyzes a reversible aldol reaction between acetaldehyde and D-glyceraldehyde 3-phosphate to generate 2-deoxy-D-ribose 5-phosphate. This chain is Deoxyribose-phosphate aldolase, found in Caldanaerobacter subterraneus subsp. tengcongensis (strain DSM 15242 / JCM 11007 / NBRC 100824 / MB4) (Thermoanaerobacter tengcongensis).